Consider the following 833-residue polypeptide: MSFYNHKEIEPKWQGYWAEHHTFKTGTDASKPKFYALDMFPYPSGAGLHVGHPEGYTATDILSRYKRAQGYNVLHPMGWDAFGLPAEQYAMDTGNDPAEFTAENIANFKRQINALGFSYDWDREVNTTDPNYYKWTQWIFTKLYEKGLAYEAEVPVNWVEELGTAIANEEVLPDGTSERGGYPVVRKPMRQWMLKITAYAERLLNDLDELDWSESIKDMQRNWIGKSTGANVTFKVKGTDKEFTVFTTRPDTLFGATFTVLAPEHELVDAITSSEQAEAVADYKHQASLKSDLVRTDLAKEKTGVWTGAYAINPVNGKEMPIWIADYVLASYGTGAVMAVPAHDQRDWEFAKQFDLPIVEVLEGGNVEEAAYTEDGLHVNSDFLDGLNKEDAIAKIVACLEEKGCGQEKVTYRLRDWLFSRQRYWGEPIPIIHWEDGTSTAVPETELPLVLPVTKDIRPSGTGESPLANLTDWLEVTREDGVKGRRETNTMPQWAGSSWYYLRYIDPHNTEKLADEDLLKQWLPVDIYVGGAEHAVLHLLYARFWHKFLYDLGVVPTKEPFQKLFNQGMILGTSYRDHRGALVATDKVEKRDGSFFHIETGEELEQAPAKMSKSLKNVVNPDDVVEQYGADTLRVYEMFMGPLDASIAWSEEGLEGSRKFLDRVYRLITSKEILAENNGALDKAYNETVKAVTEQIESLKFNTAIAQLMVFVNAANKEDKLYVDYAKGFIQLIAPFAPHLAEELWQTVAETGESISYVAWPTWDESKLVEDEIEIVVQIKGKVRAKLMVAKDLSREELQEIALADEKVKAEIDGKEIVKVISVPNKLVNIVVK.

The 'HIGH' region motif lies at 41–52 (PYPSGAGLHVGH). Residues 610 to 614 (KMSKS) carry the 'KMSKS' region motif. K613 is a binding site for ATP.

It belongs to the class-I aminoacyl-tRNA synthetase family.

Its subcellular location is the cytoplasm. It carries out the reaction tRNA(Leu) + L-leucine + ATP = L-leucyl-tRNA(Leu) + AMP + diphosphate. This is Leucine--tRNA ligase from Streptococcus pneumoniae (strain ATCC 700669 / Spain 23F-1).